A 452-amino-acid chain; its full sequence is Pup--protein ligase (452 aa).

E9 contributes to the Mg(2+) binding site. R53 is an ATP binding site. Residue Y55 participates in Mg(2+) binding. The active-site Proton acceptor is the D57. E63 is a binding site for Mg(2+). Positions 66 and 419 each coordinate ATP.

The protein belongs to the Pup ligase/Pup deamidase family. Pup-conjugating enzyme subfamily.

It carries out the reaction ATP + [prokaryotic ubiquitin-like protein]-L-glutamate + [protein]-L-lysine = ADP + phosphate + N(6)-([prokaryotic ubiquitin-like protein]-gamma-L-glutamyl)-[protein]-L-lysine.. The protein operates within protein degradation; proteasomal Pup-dependent pathway. It functions in the pathway protein modification; protein pupylation. Its function is as follows. Catalyzes the covalent attachment of the prokaryotic ubiquitin-like protein modifier Pup to the proteasomal substrate proteins, thereby targeting them for proteasomal degradation. This tagging system is termed pupylation. The ligation reaction involves the side-chain carboxylate of the C-terminal glutamate of Pup and the side-chain amino group of a substrate lysine. This Mycobacterium ulcerans (strain Agy99) protein is Pup--protein ligase.